Here is a 212-residue protein sequence, read N- to C-terminus: Probable plastid-lipid-associated protein 11, chloroplastic (212 aa).

The N-terminal 25 residues, 1 to 25, are a transit peptide targeting the chloroplast; sequence MALALSLSACSPPLRRTRRAGFRTS.

The protein belongs to the PAP/fibrillin family.

The protein resides in the plastid. Its subcellular location is the chloroplast thylakoid. In Arabidopsis thaliana (Mouse-ear cress), this protein is Probable plastid-lipid-associated protein 11, chloroplastic (PAP11).